Consider the following 145-residue polypeptide: Copper transporter 6 (145 aa).

Helical transmembrane passes span 47-67 and 99-119; these read LGMY…VEWL and YLVM…AIAG.

Belongs to the copper transporter (Ctr) (TC 1.A.56) family. SLC31A subfamily.

It is found in the membrane. Functionally, involved in the transport of copper. The chain is Copper transporter 6 (COPT6) from Arabidopsis thaliana (Mouse-ear cress).